A 296-amino-acid chain; its full sequence is Acetylglutamate kinase (296 aa).

Substrate-binding positions include 67–68 (GG), Arg-89, and Asn-194.

It belongs to the acetylglutamate kinase family. ArgB subfamily.

Its subcellular location is the cytoplasm. The catalysed reaction is N-acetyl-L-glutamate + ATP = N-acetyl-L-glutamyl 5-phosphate + ADP. Its pathway is amino-acid biosynthesis; L-arginine biosynthesis; N(2)-acetyl-L-ornithine from L-glutamate: step 2/4. Catalyzes the ATP-dependent phosphorylation of N-acetyl-L-glutamate. This chain is Acetylglutamate kinase, found in Syntrophus aciditrophicus (strain SB).